We begin with the raw amino-acid sequence, 391 residues long: Heme A synthase (391 aa).

Helical transmembrane passes span 37-57 (IRLW…VGGL), 121-141 (RQLG…FLAA), 152-172 (LLAL…MVAS), 186-206 (LATH…QALL), 229-249 (TTVL…VAGI), 298-318 (FLHR…WIFG), 332-352 (LLAM…LSAA), and 354-374 (WQVA…ILHA). Histidine 300 is a heme binding site. Heme is bound at residue histidine 360.

It belongs to the COX15/CtaA family. Type 2 subfamily. As to quaternary structure, interacts with CtaB. Heme b is required as a cofactor.

It localises to the cell membrane. The catalysed reaction is Fe(II)-heme o + 2 A + H2O = Fe(II)-heme a + 2 AH2. It functions in the pathway porphyrin-containing compound metabolism; heme A biosynthesis; heme A from heme O: step 1/1. Functionally, catalyzes the conversion of heme O to heme A by two successive hydroxylations of the methyl group at C8. The first hydroxylation forms heme I, the second hydroxylation results in an unstable dihydroxymethyl group, which spontaneously dehydrates, resulting in the formyl group of heme A. This is Heme A synthase from Cereibacter sphaeroides (strain ATCC 17023 / DSM 158 / JCM 6121 / CCUG 31486 / LMG 2827 / NBRC 12203 / NCIMB 8253 / ATH 2.4.1.) (Rhodobacter sphaeroides).